A 200-amino-acid polypeptide reads, in one-letter code: Transcription factor FapR (200 aa).

It belongs to the FapR family.

In terms of biological role, transcriptional factor involved in regulation of membrane lipid biosynthesis by repressing genes involved in fatty acid and phospholipid metabolism. The chain is Transcription factor FapR from Caldanaerobacter subterraneus subsp. tengcongensis (strain DSM 15242 / JCM 11007 / NBRC 100824 / MB4) (Thermoanaerobacter tengcongensis).